The chain runs to 356 residues: Golgi-resident adenosine 3',5'-bisphosphate 3'-phosphatase (356 aa).

M1 carries the N-acetylmethionine modification. Topologically, residues 1–12 (MAPMGIRLSPLG) are cytoplasmic. Residues 13–33 (VAVFFLLGLGVLYHLYSGFLA) form a helical membrane-spanning segment. The Lumenal segment spans residues 34 to 356 (GRFSLFGLGS…KLPDLEKSGH (323 aa)). Positions 84–104 (ESNVLHEKSKGKTREGADDKM) are disordered. The active-site Proton acceptor is D108. Mg(2+) is bound by residues E131, D172, L174, and D175. T177 functions as the Proton acceptor in the catalytic mechanism. 2 residues coordinate AMP: S240 and H243. An N-linked (GlcNAc...) asparagine glycan is attached at N257. AMP-binding residues include G266 and K270. D298 provides a ligand contact to Mg(2+).

This sequence belongs to the inositol monophosphatase superfamily. Mg(2+) is required as a cofactor. N-glycosylated. Contains N-linked glycan resistant to endoglycosydase H.

The protein localises to the golgi apparatus. The protein resides in the trans-Golgi network membrane. The catalysed reaction is adenosine 3',5'-bisphosphate + H2O = AMP + phosphate. The protein operates within sulfur metabolism. With respect to regulation, strongly inhibited by lithium. In terms of biological role, exhibits 3'-nucleotidase activity toward adenosine 3',5'-bisphosphate (PAP), namely hydrolyzes adenosine 3',5'-bisphosphate into adenosine 5'-monophosphate (AMP) and a phosphate. May play a role in the formation of skeletal elements derived through endochondral ossification, possibly by clearing adenosine 3',5'-bisphosphate produced by Golgi sulfotransferases during glycosaminoglycan sulfation. Has no activity toward 3'-phosphoadenosine 5'-phosphosulfate (PAPS) or inositol phosphate (IP) substrates including I(1)P, I(1,4)P2, I(1,3,4)P3, I(1,4,5)P3 and I(1,3,4,5)P4. The polypeptide is Golgi-resident adenosine 3',5'-bisphosphate 3'-phosphatase (Mus musculus (Mouse)).